We begin with the raw amino-acid sequence, 366 residues long: Ribosomal RNA large subunit methyltransferase M (366 aa).

S-adenosyl-L-methionine is bound by residues Ser188, 221–224 (CPGG), Asp240, Asp260, and Asp277. Lys306 functions as the Proton acceptor in the catalytic mechanism.

Belongs to the class I-like SAM-binding methyltransferase superfamily. RNA methyltransferase RlmE family. RlmM subfamily. In terms of assembly, monomer.

The protein resides in the cytoplasm. The catalysed reaction is cytidine(2498) in 23S rRNA + S-adenosyl-L-methionine = 2'-O-methylcytidine(2498) in 23S rRNA + S-adenosyl-L-homocysteine + H(+). Catalyzes the 2'-O-methylation at nucleotide C2498 in 23S rRNA. In Citrobacter koseri (strain ATCC BAA-895 / CDC 4225-83 / SGSC4696), this protein is Ribosomal RNA large subunit methyltransferase M.